Consider the following 300-residue polypeptide: tRNA dimethylallyltransferase (300 aa).

Residue 8-15 (GASASGKS) participates in ATP binding. 10–15 (SASGKS) is a substrate binding site. Residues 33-36 (DSLS) form an interaction with substrate tRNA region.

The protein belongs to the IPP transferase family. Monomer. Requires Mg(2+) as cofactor.

It carries out the reaction adenosine(37) in tRNA + dimethylallyl diphosphate = N(6)-dimethylallyladenosine(37) in tRNA + diphosphate. Catalyzes the transfer of a dimethylallyl group onto the adenine at position 37 in tRNAs that read codons beginning with uridine, leading to the formation of N6-(dimethylallyl)adenosine (i(6)A). The protein is tRNA dimethylallyltransferase of Wolinella succinogenes (strain ATCC 29543 / DSM 1740 / CCUG 13145 / JCM 31913 / LMG 7466 / NCTC 11488 / FDC 602W) (Vibrio succinogenes).